We begin with the raw amino-acid sequence, 198 residues long: Recombination protein RecR (198 aa).

The C4-type zinc-finger motif lies at 57–72 (CSICGNLTESDPCAIC). The Toprim domain occupies 80–175 (TTILVVEESK…KVTRLAHGLA (96 aa)).

The protein belongs to the RecR family.

May play a role in DNA repair. It seems to be involved in an RecBC-independent recombinational process of DNA repair. It may act with RecF and RecO. The sequence is that of Recombination protein RecR from Lactococcus lactis subsp. cremoris (strain SK11).